The following is a 692-amino-acid chain: DNA ligase (692 aa).

NAD(+) contacts are provided by residues 34 to 38 (DAEYD), 83 to 84 (SL), and Glu-124. Catalysis depends on Lys-126, which acts as the N6-AMP-lysine intermediate. Residues Arg-147, Glu-193, Lys-310, and Lys-334 each contribute to the NAD(+) site. The Zn(2+) site is built by Cys-428, Cys-431, Cys-446, and Cys-452. The BRCT domain occupies 612 to 692 (AGVAGVSGKT…ALLALLAGNA (81 aa)).

It belongs to the NAD-dependent DNA ligase family. LigA subfamily. Mg(2+) serves as cofactor. Mn(2+) is required as a cofactor.

The enzyme catalyses NAD(+) + (deoxyribonucleotide)n-3'-hydroxyl + 5'-phospho-(deoxyribonucleotide)m = (deoxyribonucleotide)n+m + AMP + beta-nicotinamide D-nucleotide.. DNA ligase that catalyzes the formation of phosphodiester linkages between 5'-phosphoryl and 3'-hydroxyl groups in double-stranded DNA using NAD as a coenzyme and as the energy source for the reaction. It is essential for DNA replication and repair of damaged DNA. This is DNA ligase from Laribacter hongkongensis (strain HLHK9).